The sequence spans 532 residues: Flavin-containing monooxygenase 1 (532 aa).

At Ala-2 the chain carries N-acetylalanine. The Lumenal portion of the chain corresponds to 2-510 (AKRVAIVGAG…ARVVQESPSP (509 aa)). Residues 9-13 (GAGVS), Glu-32, 40-41 (LW), and 61-62 (NS) each bind FAD. NADP(+) is bound by residues 60 to 61 (SN) and 195 to 198 (SGTD). A helical transmembrane segment spans residues 511–531 (FESFLKVFSFLALLVAIFLIF). Leu-532 is a topological domain (cytoplasmic).

This sequence belongs to the FMO family. FAD is required as a cofactor. As to expression, expressed mainly in fetal and adult liver.

The protein localises to the endoplasmic reticulum membrane. It catalyses the reaction hypotaurine + NADPH + O2 + H(+) = taurine + NADP(+) + H2O. The enzyme catalyses hypotaurine + NADH + O2 + H(+) = taurine + NAD(+) + H2O. It carries out the reaction trimethylamine + NADPH + O2 = trimethylamine N-oxide + NADP(+) + H2O. The catalysed reaction is N,N-dimethylaniline + NADPH + O2 + H(+) = N,N-dimethylaniline N-oxide + NADP(+) + H2O. In terms of biological role, broad spectrum monooxygenase that catalyzes the oxygenation of a wide variety of nitrogen- and sulfur-containing compounds including xenobiotics. Catalyzes the S-oxygenation of hypotaurine to produce taurine, an organic osmolyte involved in cell volume regulation as well as a variety of cytoprotective and developmental processes. In vitro, catalyzes the N-oxygenation of trimethylamine (TMA) to produce trimethylamine N-oxide (TMAO) and could therefore participate to the detoxification of this compound that is generated by the action of gut microbiota from dietary precursors such as choline, choline containing compounds, betaine or L-carnitine. This is Flavin-containing monooxygenase 1 from Homo sapiens (Human).